The chain runs to 214 residues: Oocyte zinc finger protein XlCOF10 (214 aa).

7 C2H2-type zinc fingers span residues 1–23 (FSCS…RQLH), 29–51 (FTCS…HRIH), 57–79 (FTCD…QKSH), 85–107 (FCCS…QRTH), 113–135 (FTCT…QKSH), 141–163 (FSCS…QRIH), and 169–191 (FSCS…EKCH).

Belongs to the krueppel C2H2-type zinc-finger protein family.

Its subcellular location is the nucleus. Its function is as follows. May be involved in transcriptional regulation. This Xenopus laevis (African clawed frog) protein is Oocyte zinc finger protein XlCOF10.